A 485-amino-acid polypeptide reads, in one-letter code: Glutamate mutase epsilon subunit (485 aa).

Residue Arg-100 coordinates L-glutamate. An adenosylcob(III)alamin-binding site is contributed by Asn-123. Residues 149 to 150 and Asp-171 contribute to the L-glutamate site; that span reads KH. Residues Pro-180, Phe-297, Lys-326, and Glu-330 each contribute to the adenosylcob(III)alamin site.

It belongs to the methylaspartate mutase GlmE subunit family. As to quaternary structure, heterotetramer composed of 2 epsilon subunits (GlmE) and 2 sigma subunits (GlmS). GlmE exists as a homodimer and GlmS as a monomer. Adenosylcob(III)alamin serves as cofactor.

The catalysed reaction is (2S,3S)-3-methyl-L-aspartate = L-glutamate. It functions in the pathway amino-acid degradation; L-glutamate degradation via mesaconate pathway; acetate and pyruvate from L-glutamate: step 1/4. Its function is as follows. Catalyzes the carbon skeleton rearrangement of L-glutamate to L-threo-3-methylaspartate ((2S,3S)-3-methylaspartate). This Fusobacterium nucleatum subsp. nucleatum (strain ATCC 25586 / DSM 15643 / BCRC 10681 / CIP 101130 / JCM 8532 / KCTC 2640 / LMG 13131 / VPI 4355) protein is Glutamate mutase epsilon subunit.